A 452-amino-acid polypeptide reads, in one-letter code: Probable hexaprenyl pyrophosphate synthase, mitochondrial (452 aa).

Positions 108, 111, and 204 each coordinate isopentenyl diphosphate. 2 residues coordinate Mg(2+): D211 and D215. R220 contacts an all-trans-polyprenyl diphosphate. R221 lines the isopentenyl diphosphate pocket. An all-trans-polyprenyl diphosphate is bound by residues K303, T304, Q341, and K358.

The protein belongs to the FPP/GGPP synthase family. It depends on Mg(2+) as a cofactor.

Its subcellular location is the mitochondrion. Its pathway is cofactor biosynthesis; ubiquinone biosynthesis. Its function is as follows. Assembly of polyisoprenoid side chains. The polyprenyl synthase of coenzyme Q biosynthesis catalyzes the formation from isopentenyl diphosphate of all trans-polyprenyl pyrophosphates generally ranging in length of between 6 and 10 isoprene units depending on the species. The sequence is that of Probable hexaprenyl pyrophosphate synthase, mitochondrial (COQ1) from Yarrowia lipolytica (strain CLIB 122 / E 150) (Yeast).